Here is a 407-residue protein sequence, read N- to C-terminus: MTYPNLLDRFLTYVKVNTRSDEHSTTTPSTQSQVDFATNVLIPEMKRVGLQNVYYLPNGFAIGTLPANDPSLTRKIGFISHMDTADFNAEGVNPQVIENYDGGVIELGNSGFKLDPADFKSLEKYPGQTLITTDGTTLLGADDKSGIAEIMTAIEYLTAHPEIKHCEIRVGFGPDEEIGVGANKFDAEDFDVDFAYTVDGGPLGELQYETFSAAGAELHFQGRNVHPGTAKGQMVNALQLAIDFHNQLPENDRPELTEGYQGFYHLMDVTGSVEEARASYIIRDFEKDAFEARKASMQSIADKMNEELGSNRVTLNLTDQYYNMKEVIEKDMTPITVAKAVMEDLGITPIIEPIRGGTDGSKISFMGIPTPNIFAGGENMHGRFEYVSLQTMERAVDTIIGIVAYKG.

His-81 lines the Zn(2+) pocket. Residue Asp-83 is part of the active site. Residue Asp-142 coordinates Zn(2+). The Proton acceptor role is filled by Glu-176. Positions 177, 199, and 381 each coordinate Zn(2+).

It belongs to the peptidase M20B family. Requires Zn(2+) as cofactor.

The protein localises to the cytoplasm. The enzyme catalyses Release of the N-terminal residue from a tripeptide.. In terms of biological role, cleaves the N-terminal amino acid of tripeptides. In Streptococcus pneumoniae (strain Hungary19A-6), this protein is Peptidase T.